The following is a 715-amino-acid chain: Fatty acid oxidation complex subunit alpha (715 aa).

The tract at residues Met-1 to Ala-190 is enoyl-CoA hydratase/isomerase. Asp-297 provides a ligand contact to substrate. The 3-hydroxyacyl-CoA dehydrogenase stretch occupies residues Lys-312 to Gly-715. NAD(+)-binding positions include Met-325, Asp-344, Val-401–Glu-403, Lys-408, and Ser-430. His-451 (for 3-hydroxyacyl-CoA dehydrogenase activity) is an active-site residue. Position 454 (Asn-454) interacts with NAD(+). Residues Asn-501 and Tyr-660 each contribute to the substrate site.

The protein in the N-terminal section; belongs to the enoyl-CoA hydratase/isomerase family. It in the C-terminal section; belongs to the 3-hydroxyacyl-CoA dehydrogenase family. In terms of assembly, heterotetramer of two alpha chains (FadB) and two beta chains (FadA).

It catalyses the reaction a (3S)-3-hydroxyacyl-CoA + NAD(+) = a 3-oxoacyl-CoA + NADH + H(+). The enzyme catalyses a (3S)-3-hydroxyacyl-CoA = a (2E)-enoyl-CoA + H2O. The catalysed reaction is a 4-saturated-(3S)-3-hydroxyacyl-CoA = a (3E)-enoyl-CoA + H2O. It carries out the reaction (3S)-3-hydroxybutanoyl-CoA = (3R)-3-hydroxybutanoyl-CoA. It catalyses the reaction a (3Z)-enoyl-CoA = a 4-saturated (2E)-enoyl-CoA. The enzyme catalyses a (3E)-enoyl-CoA = a 4-saturated (2E)-enoyl-CoA. The protein operates within lipid metabolism; fatty acid beta-oxidation. Involved in the aerobic and anaerobic degradation of long-chain fatty acids via beta-oxidation cycle. Catalyzes the formation of 3-oxoacyl-CoA from enoyl-CoA via L-3-hydroxyacyl-CoA. It can also use D-3-hydroxyacyl-CoA and cis-3-enoyl-CoA as substrate. The polypeptide is Fatty acid oxidation complex subunit alpha (Pseudomonas fluorescens (strain Pf0-1)).